A 236-amino-acid polypeptide reads, in one-letter code: Activating transcription factor of chaperone (236 aa).

The tract at residues 117-185 is disordered; the sequence is HRASQLASPQ…KNAATRYRQK (69 aa). Residues 120–137 show a composition bias toward low complexity; the sequence is SQLASPQHSSSSANASPR. Residues 162–175 are compositionally biased toward basic and acidic residues; it reads RPVDDRRSRKKEQN. One can recognise a bZIP domain in the interval 165 to 228; the sequence is DDRRSRKKEQ…RYLKALMRDL (64 aa). The segment at 167 to 187 is basic motif; the sequence is RRSRKKEQNKNAATRYRQKKK. The leucine-zipper stretch occupies residues 193 to 228; it reads LLKEEQTLRQRHTELGEKCSDLQREIRYLKALMRDL.

This sequence belongs to the bZIP family. Binds DNA as a dimer.

It is found in the nucleus. Its function is as follows. Transcriptional activator that acts in the unfolded protein response (UPR) pathway. Acts during endoplasmic reticulum (ER) stress by activating UPR target genes via direct binding to the UPR element (UPRE) (5'-GGAACTGGACAGCGTGTCGAAA-3'). Activates expression of ER chaperones ERP72 and PDI. This Bombyx mori (Silk moth) protein is Activating transcription factor of chaperone.